A 309-amino-acid chain; its full sequence is tRNA pseudouridine synthase B (309 aa).

The Nucleophile role is filled by aspartate 39. A PUA domain is found at 229–306 (LPRVVVHQES…ERVLTLRKVF (78 aa)).

The protein belongs to the pseudouridine synthase TruB family. Type 1 subfamily.

It catalyses the reaction uridine(55) in tRNA = pseudouridine(55) in tRNA. Functionally, responsible for synthesis of pseudouridine from uracil-55 in the psi GC loop of transfer RNAs. This chain is tRNA pseudouridine synthase B, found in Thermotoga maritima (strain ATCC 43589 / DSM 3109 / JCM 10099 / NBRC 100826 / MSB8).